Here is a 205-residue protein sequence, read N- to C-terminus: Probable molybdenum cofactor guanylyltransferase (205 aa).

Residues leucine 9–glycine 11, lysine 21, aspartate 66, and aspartate 95 contribute to the GTP site. A Mg(2+)-binding site is contributed by aspartate 95.

The protein belongs to the MobA family. Mg(2+) is required as a cofactor.

It localises to the cytoplasm. It carries out the reaction Mo-molybdopterin + GTP + H(+) = Mo-molybdopterin guanine dinucleotide + diphosphate. Transfers a GMP moiety from GTP to Mo-molybdopterin (Mo-MPT) cofactor (Moco or molybdenum cofactor) to form Mo-molybdopterin guanine dinucleotide (Mo-MGD) cofactor. This Pelotomaculum thermopropionicum (strain DSM 13744 / JCM 10971 / SI) protein is Probable molybdenum cofactor guanylyltransferase.